The following is a 90-amino-acid chain: Small ribosomal subunit protein bS18 (90 aa).

Residues 1 to 23 form a disordered region; that stretch reads MKPMRQKNTRAQGNKSISNALAS. Residues 9–21 are compositionally biased toward polar residues; it reads TRAQGNKSISNAL.

The protein belongs to the bacterial ribosomal protein bS18 family. As to quaternary structure, part of the 30S ribosomal subunit. Forms a tight heterodimer with protein bS6.

Its function is as follows. Binds as a heterodimer with protein bS6 to the central domain of the 16S rRNA, where it helps stabilize the platform of the 30S subunit. This Chlorobium luteolum (strain DSM 273 / BCRC 81028 / 2530) (Pelodictyon luteolum) protein is Small ribosomal subunit protein bS18.